The chain runs to 683 residues: ATP-dependent zinc metalloprotease FtsH 2 (683 aa).

The segment covering 1-12 (MADQTSQNDNQN) has biased composition (polar residues). A disordered region spans residues 1–21 (MADQTSQNDNQNGSGLPGGGP). Residues 1–28 (MADQTSQNDNQNGSGLPGGGPSGTGRGR) are Cytoplasmic-facing. Residues 29-49 (LIIWVIAGTLLALWAYSYWGM) traverse the membrane as a helical segment. The Periplasmic portion of the chain corresponds to 50 to 136 (GASGGERISY…VTKPESSFPW (87 aa)). A helical transmembrane segment spans residues 137-157 (GLVIMGLLPVLLLFGVGYIFL). Topologically, residues 158–683 (RRMQSQGQGL…ASGSADASGS (526 aa)) are cytoplasmic. An ATP-binding site is contributed by 228–235 (GPPGTGKT). Zn(2+) is bound at residue histidine 450. The active site involves glutamate 451. Histidine 454 and aspartate 526 together coordinate Zn(2+). A disordered region spans residues 627–683 (VNGDTDEIGHMPTTNGAAASEENGSADDHEPDEATVIEEDGESGEGRASGSADASGS). The segment covering 655–669 (HEPDEATVIEEDGES) has biased composition (acidic residues). The segment covering 672–683 (GRASGSADASGS) has biased composition (low complexity).

This sequence in the central section; belongs to the AAA ATPase family. It in the C-terminal section; belongs to the peptidase M41 family. As to quaternary structure, homohexamer. Zn(2+) is required as a cofactor.

It localises to the cell inner membrane. In terms of biological role, acts as a processive, ATP-dependent zinc metallopeptidase for both cytoplasmic and membrane proteins. Plays a role in the quality control of integral membrane proteins. The protein is ATP-dependent zinc metalloprotease FtsH 2 of Salinibacter ruber (strain M8).